A 398-amino-acid chain; its full sequence is Digeranylgeranylglycerophospholipid reductase (398 aa).

10 residues coordinate FAD: Ala15, Glu34, Cys45, Ala46, Gly48, Arg99, Ala123, Asp280, Gly292, and Ile293. Val372 provides a ligand contact to a 2,3-bis-O-(geranylgeranyl)-sn-glycerol 1-phospholipid.

This sequence belongs to the geranylgeranyl reductase family. DGGGPL reductase subfamily. Requires FAD as cofactor.

It catalyses the reaction a 2,3-bis-O-phytanyl-sn-glycerol 1-phospholipid + 8 oxidized 2[4Fe-4S]-[ferredoxin] = a 2,3-bis-O-(geranylgeranyl)-sn-glycerol 1-phospholipid + 8 reduced 2[4Fe-4S]-[ferredoxin] + 16 H(+). The enzyme catalyses 2,3-bis-O-(phytanyl)-sn-glycerol 1-phosphate + 8 oxidized 2[4Fe-4S]-[ferredoxin] = 2,3-bis-O-(geranylgeranyl)-sn-glycerol 1-phosphate + 8 reduced 2[4Fe-4S]-[ferredoxin] + 16 H(+). It carries out the reaction a 2,3-bis-O-phytanyl-sn-glycerol 1-phospholipid + 8 A = a 2,3-bis-O-(geranylgeranyl)-sn-glycerol 1-phospholipid + 8 AH2. The catalysed reaction is CDP-2,3-bis-O-(geranylgeranyl)-sn-glycerol + 8 AH2 = CDP-2,3-bis-O-(phytanyl)-sn-glycerol + 8 A. It catalyses the reaction archaetidylserine + 8 AH2 = 2,3-bis-O-phytanyl-sn-glycero-3-phospho-L-serine + 8 A. The protein operates within membrane lipid metabolism; glycerophospholipid metabolism. Its function is as follows. Is involved in the reduction of 2,3-digeranylgeranylglycerophospholipids (unsaturated archaeols) into 2,3-diphytanylglycerophospholipids (saturated archaeols) in the biosynthesis of archaeal membrane lipids. Catalyzes the formation of archaetidic acid (2,3-di-O-phytanyl-sn-glyceryl phosphate) from 2,3-di-O-geranylgeranylglyceryl phosphate (DGGGP) via the hydrogenation of each double bond of the isoprenoid chains. Is also probably able to reduce double bonds of geranyl groups in CDP-2,3-bis-O-(geranylgeranyl)-sn-glycerol and archaetidylserine, thus acting at various stages in the biosynthesis of archaeal membrane lipids. The chain is Digeranylgeranylglycerophospholipid reductase from Methanoculleus marisnigri (strain ATCC 35101 / DSM 1498 / JR1).